The primary structure comprises 83 residues: Putative beta-neurotoxin RjAa10f (83 aa).

The N-terminal stretch at 1 to 18 (MKILIFIIASFMLIGVWC) is a signal peptide. Positions 19 to 82 (KEGYPMGRDG…VWDPNNNKCV (64 aa)) constitute an LCN-type CS-alpha/beta domain. 4 disulfides stabilise this stretch: cysteine 29–cysteine 81, cysteine 33–cysteine 55, cysteine 40–cysteine 62, and cysteine 44–cysteine 64.

It belongs to the long (4 C-C) scorpion toxin superfamily. Sodium channel inhibitor family. Beta subfamily. Expressed by the venom gland.

The protein localises to the secreted. Functionally, beta toxins bind voltage-independently at site-4 of sodium channels (Nav) and shift the voltage of activation toward more negative potentials thereby affecting sodium channel activation and promoting spontaneous and repetitive firing. The protein is Putative beta-neurotoxin RjAa10f of Rhopalurus junceus (Caribbean blue scorpion).